The primary structure comprises 298 residues: MIVMQFPREEYFAPGHRGCAGCGAAIVARLLLKVAGKDTIITNATGCLEVMTTPYPETSWRVPWIHTAFENAAATASGIEAAVKALKRKRGKFADKKINVIAIGGDGGTADIGFQALSGAMERGHDILYIMYDNEAYMNTGIQRSSSTPFMAATTTSPAGSKIRGEDRPKKDMTMIMAAHGIPYVATACISYPEDFMRKVKKALSIEGPKFIQVLQPCTTGWGYPPEKTIEIGRLAVETGIFPLYEIENGEFRITYKPAKRKPVREYLKMQKRYRHLTDEDIERIQKYIDEKCKLLGL.

[4Fe-4S] cluster-binding residues include Cys-19, Cys-22, Cys-47, and Cys-218.

As to quaternary structure, heterotetramer of one alpha, one beta, one delta and one gamma chain. Requires [4Fe-4S] cluster as cofactor.

It carries out the reaction 2 oxidized [2Fe-2S]-[ferredoxin] + pyruvate + CoA = 2 reduced [2Fe-2S]-[ferredoxin] + acetyl-CoA + CO2 + H(+). The protein is Pyruvate synthase subunit PorB (porB) of Methanocaldococcus jannaschii (strain ATCC 43067 / DSM 2661 / JAL-1 / JCM 10045 / NBRC 100440) (Methanococcus jannaschii).